We begin with the raw amino-acid sequence, 173 residues long: Bifunctional protein PyrR (173 aa).

The PRPP-binding motif lies at 93-105 (IILIDDVLYTGRT).

It belongs to the purine/pyrimidine phosphoribosyltransferase family. PyrR subfamily. In terms of assembly, homodimer and homohexamer; in equilibrium.

The catalysed reaction is UMP + diphosphate = 5-phospho-alpha-D-ribose 1-diphosphate + uracil. Regulates transcriptional attenuation of the pyrimidine nucleotide (pyr) operon by binding in a uridine-dependent manner to specific sites on pyr mRNA. This disrupts an antiterminator hairpin in the RNA and favors formation of a downstream transcription terminator, leading to a reduced expression of downstream genes. Its function is as follows. Also displays a weak uracil phosphoribosyltransferase activity which is not physiologically significant. This Streptococcus agalactiae serotype Ia (strain ATCC 27591 / A909 / CDC SS700) protein is Bifunctional protein PyrR.